The sequence spans 334 residues: MASTKGKLIHEMVPSKERDPPHSKVTIVGVGQVGMAAAISVLLRDLADELALVDVVEDRLKGEMMDLLHGSLFLKTAKIVADKDYSVTAGSRLVVVTAGARQQEGESRLNLVQRNVNIFKFIIPNIVKYSPNCILLVVSNPVDILTYVAWKLSGLPKHRVIGSGCNLDSARFRYLMSERLGVNSASCHGWIIGEHGDSSVPVWSGVNVAGVGLQSLNPDIGTPKDGEDWKSVHKQVVDSAYEVIKLKGYTSWAIGLSVADLAETILKNLRRVHPVSTHCKGQHGVHDDVFLSLPCVLGSEGITDIINQTLKKEEEAQVQKSAETLWNVQKELTF.

The segment at 1–22 (MASTKGKLIHEMVPSKERDPPH) is disordered. Basic and acidic residues predominate over residues 8 to 22 (LIHEMVPSKERDPPH). NAD(+) is bound by residues 31–59 (GQVG…VEDR) and arginine 101. Residues arginine 108, asparagine 140, and arginine 171 each contribute to the substrate site. Asparagine 140 is a binding site for NAD(+). Histidine 195 (proton acceptor) is an active-site residue. Threonine 250 is a substrate binding site.

The protein belongs to the LDH/MDH superfamily. LDH family. As to quaternary structure, homotetramer.

The protein resides in the cytoplasm. The catalysed reaction is (S)-lactate + NAD(+) = pyruvate + NADH + H(+). It participates in fermentation; pyruvate fermentation to lactate; (S)-lactate from pyruvate: step 1/1. This is L-lactate dehydrogenase from Petromyzon marinus (Sea lamprey).